Here is a 168-residue protein sequence, read N- to C-terminus: ATP synthase subunit b (168 aa).

A helical membrane pass occupies residues 7–26; it reads FVLSNFIFTLINLWIMYWVL.

The protein belongs to the ATPase B chain family. In terms of assembly, F-type ATPases have 2 components, F(1) - the catalytic core - and F(0) - the membrane proton channel. F(1) has five subunits: alpha(3), beta(3), gamma(1), delta(1), epsilon(1). F(0) has three main subunits: a(1), b(2) and c(10-14). The alpha and beta chains form an alternating ring which encloses part of the gamma chain. F(1) is attached to F(0) by a central stalk formed by the gamma and epsilon chains, while a peripheral stalk is formed by the delta and b chains.

The protein resides in the cell membrane. Its function is as follows. F(1)F(0) ATP synthase produces ATP from ADP in the presence of a proton or sodium gradient. F-type ATPases consist of two structural domains, F(1) containing the extramembraneous catalytic core and F(0) containing the membrane proton channel, linked together by a central stalk and a peripheral stalk. During catalysis, ATP synthesis in the catalytic domain of F(1) is coupled via a rotary mechanism of the central stalk subunits to proton translocation. In terms of biological role, component of the F(0) channel, it forms part of the peripheral stalk, linking F(1) to F(0). The chain is ATP synthase subunit b from Alkaliphilus metalliredigens (strain QYMF).